The sequence spans 547 residues: KsdD-like steroid dehydrogenase MSMEG_5835 (547 aa).

Residue 5 to 36 participates in FAD binding; sequence DVIVVGAGLAGLVAACELVERGHSVIIVDQEN.

Belongs to the FAD-dependent oxidoreductase 2 family. It depends on FAD as a cofactor.

The protein operates within lipid metabolism; steroid biosynthesis. Functionally, able to catalyze the elimination of the C-1 and C-2 hydrogen atoms of the A-ring from the polycyclic ring structure of 3-ketosteroids, but the ketosteroid dehydrogenase activity is low compared to KsdD in the cholesterol degradation process. The low activity could be due to different substrate specificity. The chain is KsdD-like steroid dehydrogenase MSMEG_5835 from Mycolicibacterium smegmatis (strain ATCC 700084 / mc(2)155) (Mycobacterium smegmatis).